Here is a 547-residue protein sequence, read N- to C-terminus: Glucose-6-phosphate isomerase 2 (547 aa).

Residue Glu-351 is the Proton donor of the active site. Active-site residues include His-382 and Lys-508.

It belongs to the GPI family.

The protein localises to the cytoplasm. It carries out the reaction alpha-D-glucose 6-phosphate = beta-D-fructose 6-phosphate. The protein operates within carbohydrate biosynthesis; gluconeogenesis. It participates in carbohydrate degradation; glycolysis; D-glyceraldehyde 3-phosphate and glycerone phosphate from D-glucose: step 2/4. Its function is as follows. Catalyzes the reversible isomerization of glucose-6-phosphate to fructose-6-phosphate. The protein is Glucose-6-phosphate isomerase 2 of Neisseria meningitidis serogroup A / serotype 4A (strain DSM 15465 / Z2491).